Reading from the N-terminus, the 132-residue chain is uncharacterized protein (132 aa).

This is an uncharacterized protein from Saccharomyces cerevisiae (strain ATCC 204508 / S288c) (Baker's yeast).